A 358-amino-acid chain; its full sequence is 3-dehydroquinate synthase (358 aa).

NAD(+) contacts are provided by residues 105-109 (GVVGD), 129-130 (TT), K142, K151, and 169-172 (TLKT). Zn(2+)-binding residues include E184, H245, and H262.

It belongs to the sugar phosphate cyclases superfamily. Dehydroquinate synthase family. NAD(+) is required as a cofactor. Co(2+) serves as cofactor. Requires Zn(2+) as cofactor.

Its subcellular location is the cytoplasm. The enzyme catalyses 7-phospho-2-dehydro-3-deoxy-D-arabino-heptonate = 3-dehydroquinate + phosphate. Its pathway is metabolic intermediate biosynthesis; chorismate biosynthesis; chorismate from D-erythrose 4-phosphate and phosphoenolpyruvate: step 2/7. Functionally, catalyzes the conversion of 3-deoxy-D-arabino-heptulosonate 7-phosphate (DAHP) to dehydroquinate (DHQ). The chain is 3-dehydroquinate synthase from Enterococcus faecalis (strain ATCC 700802 / V583).